A 179-amino-acid polypeptide reads, in one-letter code: Phospholipase A2 (179 aa).

The N-terminal stretch at 1–21 (MHALRSSVLALWLCLHVSVRA) is a signal peptide. A propeptide spanning residues 22-39 (WMTYRSANGLDEYEPEDR) is cleaved from the precursor. The Ca(2+) site is built by tryptophan 47, glycine 49, and glycine 51. 5 disulfides stabilise this stretch: cysteine 48–cysteine 70, cysteine 69–cysteine 109, cysteine 76–cysteine 102, cysteine 100–cysteine 133, and cysteine 142–cysteine 150. Residue histidine 73 is part of the active site. Aspartate 74 contributes to the Ca(2+) binding site. The active site involves aspartate 103.

Belongs to the phospholipase A2 family. Group III subfamily. Ca(2+) serves as cofactor. Expressed by the venom gland.

It is found in the secreted. It carries out the reaction a 1,2-diacyl-sn-glycero-3-phosphocholine + H2O = a 1-acyl-sn-glycero-3-phosphocholine + a fatty acid + H(+). Its function is as follows. May potentiate Xylotoxin(1)-Xa1a DRG activation and cell lysis, since the orthologous A.mellifera PA2 potentiates Xylotoxin(1)-Xa1a DRG activation and cell lysis. In vivo, intraplantar injection in mice may potentiate spontaneous pain behaviors and paw swelling caused by Xylotoxin(1)-Xa1a, since the orthologous A.mellifera PA2 shows this effect. PLA2 catalyzes the calcium-dependent hydrolysis of the 2-acyl groups in 3-sn-phosphoglycerides. This is Phospholipase A2 from Xylocopa aruana (Great carpenter bee).